Reading from the N-terminus, the 267-residue chain is Probable aquaporin TIP3-2 (267 aa).

M1 bears the N-acetylmethionine mark. A2 carries the post-translational modification N-acetylalanine; in Probable aquaporin TIP3-2, N-terminally processed. At 2-26 the chain is on the cytoplasmic side; sequence ATSARRAYGFGRADEATHPDSIRAT. The chain crosses the membrane as a helical span at residues 27–47; the sequence is LAEFLSTFVFVFAGEGSILAL. Residues 48-66 are Vacuolar-facing; it reads DKLYWDTAAHTGTNTPGGL. Residues 67–87 traverse the membrane as a helical segment; sequence VLVALAHALALFAAVSAAINV. The Cytoplasmic portion of the chain corresponds to 88–110; sequence SGGHVNPAVTFAALIGGRISVIR. Positions 93–95 match the NPA 1 motif; the sequence is NPA. The helical transmembrane segment at 111–131 threads the bilayer; sequence AIYYWVAQLIGAILACLLLRL. Residues 132–151 are Vacuolar-facing; sequence ATNGLRPVGFHVASGVSELH. Residues 152–172 form a helical membrane-spanning segment; the sequence is GLLMEIILTFALVYVVYSTAI. Over 173–178 the chain is Cytoplasmic; the sequence is DPKRGS. Residues 179-199 traverse the membrane as a helical segment; it reads IGIIAPLAIGLIVGANILVGG. The Vacuolar portion of the chain corresponds to 200-226; sequence PFDGASMNPARAFGPALVGWRWSNHWI. The NPA 2 signature appears at 207–209; that stretch reads NPA. The helical transmembrane segment at 227 to 247 threads the bilayer; that stretch reads YWVGPFIGGALAALIYEYMII. Topologically, residues 248–267 are cytoplasmic; that stretch reads PSVNEPPHHSTHQPLAPEDY.

This sequence belongs to the MIP/aquaporin (TC 1.A.8) family. TIP (TC 1.A.8.10) subfamily. In terms of tissue distribution, predominantly expressed in developing seeds. Also expressed in rosette leaves.

It localises to the vacuole membrane. Functionally, aquaporins facilitate the transport of water and small neutral solutes across cell membranes. The protein is Probable aquaporin TIP3-2 (TIP3-2) of Arabidopsis thaliana (Mouse-ear cress).